A 105-amino-acid chain; its full sequence is Small ribosomal subunit protein uS10 (105 aa).

Belongs to the universal ribosomal protein uS10 family. In terms of assembly, part of the 30S ribosomal subunit.

Involved in the binding of tRNA to the ribosomes. The polypeptide is Small ribosomal subunit protein uS10 (Rickettsia canadensis (strain McKiel)).